Here is a 337-residue protein sequence, read N- to C-terminus: Neurogenic differentiation factor 6 (337 aa).

Residues 28 to 80 (QKQIKKPESFPKQVVLRGKSIKRAPGEETEKEEEEEDREEEDENGLSRRRGLR) are disordered. Residues 54-71 (EETEKEEEEEDREEEDEN) show a composition bias toward acidic residues. The Nuclear localization signal signature appears at 80–86 (RKKKTTK). Residues 94–146 (FRRQEANARERNRMHGLNDALDNLRKVVPCYSKTQKLSKIETLRLAKNYIWAL) form the bHLH domain.

As to quaternary structure, efficient DNA binding requires dimerization with another bHLH protein. Specific to the nervous system of both embryos and adults. Highest levels in the cortical plate of the cerebrum.

It localises to the nucleus. In terms of biological role, activates E box-dependent transcription in collaboration with TCF3/E47. May be a trans-acting factor involved in the development and maintenance of the mammalian nervous system. Transactivates the promoter of its own gene. The polypeptide is Neurogenic differentiation factor 6 (Neurod6) (Mus musculus (Mouse)).